The chain runs to 346 residues: B3 domain-containing protein At5g60142 (346 aa).

Positions 13 to 109 (PKFFKVYLPD…CFNFCIYGRA (97 aa)) form a DNA-binding region, TF-B3. 2 disordered regions span residues 158-179 (QDYNEEDTSSEDITALDDADND) and 192-243 (TSSE…HDRQ). The span at 192-217 (TSSEDIIVIDDDDDDDDQDYGDDDHA) shows a compositional bias: acidic residues. Residues 218–229 (DVEKERWRGVKT) show a composition bias toward basic and acidic residues.

It is found in the nucleus. The chain is B3 domain-containing protein At5g60142 from Arabidopsis thaliana (Mouse-ear cress).